The chain runs to 500 residues: Putative DNA recombinase (500 aa).

Residues 1 to 144 (MIAIYVRVST…SGRLQKMKKG (144 aa)) enclose the Resolvase/invertase-type recombinase catalytic domain. The O-(5'-phospho-DNA)-serine intermediate role is filled by Ser9. Positions 152–288 (LYGYKFVKEK…QELLGQSKRK (137 aa)) form a DNA-binding region, recombinase. A coiled-coil region spans residues 372 to 448 (KEAEQSNHLS…IQSKMKVLDD (77 aa)).

In the N-terminal section; belongs to the site-specific recombinase resolvase family.

Functionally, putative site-specific recombinase having a very important role in sporulation. It probably plays a role in the recombination of SpoIIIC and SpoIVCB to form sigma K factor. This Bacillus subtilis (strain 168) protein is Putative DNA recombinase (cisA).